Consider the following 145-residue polypeptide: Plastocyanin, chloroplastic (145 aa).

The transit peptide at 1 to 47 (MKATLRAPASRASAVRPVASLKAAAQRVASVAGVSVASLALTLAAHA) directs the protein to the chloroplast. A Plastocyanin-like domain is found at 48–145 (DATVKLGADS…AGMVGKIIVQ (98 aa)). Cu cation-binding residues include His-85, Cys-130, His-133, and Met-138.

Belongs to the plastocyanin family. It depends on Cu(2+) as a cofactor.

It is found in the plastid. The protein resides in the chloroplast thylakoid membrane. In terms of biological role, participates in electron transfer between P700 and the cytochrome b6-f complex in photosystem I. In Chlamydomonas reinhardtii (Chlamydomonas smithii), this protein is Plastocyanin, chloroplastic (PETE).